The following is a 255-amino-acid chain: F-box/SPRY domain-containing protein 1 (255 aa).

An F-box domain is found at 3 to 51 (DPVAALCNYNVLEVIFSYLELDDLSHCSQVCKSWNLFLNDENSDVWRWH). The B30.2/SPRY domain maps to 61–253 (LKSDLLSSVS…VSMVYLGTPM (193 aa)).

Belongs to the FBXO45/Fsn family. In terms of assembly, component of an E3 ubiquitin ligase complex composed of hiw and Fsn.

It localises to the synapse. The protein operates within protein modification; protein ubiquitination. Required in the presynaptic motoneuron to down-regulate the levels of wnd and restrain synaptic terminal growth at the neuromuscular junction (NMJ). The sequence is that of F-box/SPRY domain-containing protein 1 from Drosophila ananassae (Fruit fly).